The primary structure comprises 123 residues: Large ribosomal subunit protein bL21 (123 aa).

The protein belongs to the bacterial ribosomal protein bL21 family. In terms of assembly, part of the 50S ribosomal subunit. Contacts protein L20.

In terms of biological role, this protein binds to 23S rRNA in the presence of protein L20. This Rhizobium meliloti (strain 1021) (Ensifer meliloti) protein is Large ribosomal subunit protein bL21.